Reading from the N-terminus, the 499-residue chain is Glycerol kinase (499 aa).

T13 contacts ADP. T13, T14, and S15 together coordinate ATP. T13 lines the sn-glycerol 3-phosphate pocket. R17 contributes to the ADP binding site. Sn-glycerol 3-phosphate is bound by residues R83, E84, Y135, and D245. Residues R83, E84, Y135, D245, and Q246 each contribute to the glycerol site. 2 residues coordinate ADP: T267 and G310. ATP-binding residues include T267, G310, Q314, and A411. Residues A411 and N415 each coordinate ADP.

The protein belongs to the FGGY kinase family.

The enzyme catalyses glycerol + ATP = sn-glycerol 3-phosphate + ADP + H(+). The protein operates within polyol metabolism; glycerol degradation via glycerol kinase pathway; sn-glycerol 3-phosphate from glycerol: step 1/1. Its activity is regulated as follows. Inhibited by fructose 1,6-bisphosphate (FBP). In terms of biological role, key enzyme in the regulation of glycerol uptake and metabolism. Catalyzes the phosphorylation of glycerol to yield sn-glycerol 3-phosphate. The sequence is that of Glycerol kinase from Xylella fastidiosa (strain M12).